A 360-amino-acid chain; its full sequence is Phospho-N-acetylmuramoyl-pentapeptide-transferase (360 aa).

10 helical membrane-spanning segments follow: residues 21–41, 73–93, 98–118, 132–152, 168–188, 199–219, 236–256, 263–283, 288–308, and 338–358; these read YITF…LWIG, TMGG…WADL, VWFV…DDYW, WKYF…YAVG, FMPQ…VGTS, GLAI…AWAT, AGEL…FLWY, VFMG…IAVL, LLLV…ILQV, and VIVR…VTLK.

Belongs to the glycosyltransferase 4 family. MraY subfamily. Requires Mg(2+) as cofactor.

The protein localises to the cell inner membrane. The enzyme catalyses UDP-N-acetyl-alpha-D-muramoyl-L-alanyl-gamma-D-glutamyl-meso-2,6-diaminopimeloyl-D-alanyl-D-alanine + di-trans,octa-cis-undecaprenyl phosphate = di-trans,octa-cis-undecaprenyl diphospho-N-acetyl-alpha-D-muramoyl-L-alanyl-D-glutamyl-meso-2,6-diaminopimeloyl-D-alanyl-D-alanine + UMP. It functions in the pathway cell wall biogenesis; peptidoglycan biosynthesis. Catalyzes the initial step of the lipid cycle reactions in the biosynthesis of the cell wall peptidoglycan: transfers peptidoglycan precursor phospho-MurNAc-pentapeptide from UDP-MurNAc-pentapeptide onto the lipid carrier undecaprenyl phosphate, yielding undecaprenyl-pyrophosphoryl-MurNAc-pentapeptide, known as lipid I. The sequence is that of Phospho-N-acetylmuramoyl-pentapeptide-transferase from Actinobacillus pleuropneumoniae serotype 3 (strain JL03).